A 182-amino-acid polypeptide reads, in one-letter code: CDP-diacylglycerol--glycerol-3-phosphate 3-phosphatidyltransferase (182 aa).

The Cytoplasmic segment spans residues 1 to 12; it reads MQLNIPTWLTLF. Residues 13 to 37 traverse the membrane as a helical segment; the sequence is RVVLIPFFVLAFYLPFVWAPMVCAI. At 38–60 the chain is on the periplasmic side; it reads IFVFAAATDWFDGFLARRWKQTT. A helical membrane pass occupies residues 61 to 81; it reads RFGAFLDPVADKVMVAIALVL. Residues 82–86 lie on the Cytoplasmic side of the membrane; the sequence is VAEHY. Residues 87–107 traverse the membrane as a helical segment; that stretch reads HVWWITLPAATMIAREIIISS. Residues 108–145 lie on the Periplasmic side of the membrane; sequence LREWMAEIGKRSSVAVSWIGKVKTTAQMGSLVGLLWRP. A helical transmembrane segment spans residues 146 to 168; that stretch reads DHNIELASFVLLYIAAVLTFWSM. At 169–181 the chain is on the cytoplasmic side; that stretch reads FQYLNAAWKDLLE.

Belongs to the CDP-alcohol phosphatidyltransferase class-I family.

Its subcellular location is the cell inner membrane. The catalysed reaction is a CDP-1,2-diacyl-sn-glycerol + sn-glycerol 3-phosphate = a 1,2-diacyl-sn-glycero-3-phospho-(1'-sn-glycero-3'-phosphate) + CMP + H(+). It functions in the pathway phospholipid metabolism; phosphatidylglycerol biosynthesis; phosphatidylglycerol from CDP-diacylglycerol: step 1/2. In terms of biological role, catalyzes the conversion of cytidine diphosphate diacylglycerol (CDP-DG) and glycerol 3-phosphate into phosphatidylglycerol. Essential for the synthesis of anionic phospholipids, thereby playing a role in balancing the ratio of zwitterionic and anionic phospholipids, which is thought to be important for normal membrane function. This Yersinia enterocolitica serotype O:8 / biotype 1B (strain NCTC 13174 / 8081) protein is CDP-diacylglycerol--glycerol-3-phosphate 3-phosphatidyltransferase.